The following is a 265-amino-acid chain: Type II pantothenate kinase (265 aa).

ATP is bound at residue 6–13; it reads DAGGTLIK. The active-site Proton acceptor is E70. Residues T99, 121 to 125, Y137, and S225 contribute to the ATP site; that span reads GGMIQ.

The protein belongs to the type II pantothenate kinase family. As to quaternary structure, homodimer.

It localises to the cytoplasm. The enzyme catalyses (R)-pantothenate + ATP = (R)-4'-phosphopantothenate + ADP + H(+). It participates in cofactor biosynthesis; coenzyme A biosynthesis; CoA from (R)-pantothenate: step 1/5. Functionally, catalyzes the phosphorylation of pantothenate (Pan), the first step in CoA biosynthesis. In Staphylococcus epidermidis (strain ATCC 35984 / DSM 28319 / BCRC 17069 / CCUG 31568 / BM 3577 / RP62A), this protein is Type II pantothenate kinase.